Reading from the N-terminus, the 254-residue chain is 4-hydroxy-tetrahydrodipicolinate reductase (254 aa).

Residues 8–13, Asp-35, 86–88, and 110–113 contribute to the NAD(+) site; these read GCSGKM, CST, and SANM. His-143 functions as the Proton donor/acceptor in the catalytic mechanism. His-144 is a binding site for (S)-2,3,4,5-tetrahydrodipicolinate. Residue Lys-147 is the Proton donor of the active site. 153-154 is a binding site for (S)-2,3,4,5-tetrahydrodipicolinate; that stretch reads GT.

It belongs to the DapB family.

It is found in the cytoplasm. It carries out the reaction (S)-2,3,4,5-tetrahydrodipicolinate + NAD(+) + H2O = (2S,4S)-4-hydroxy-2,3,4,5-tetrahydrodipicolinate + NADH + H(+). The catalysed reaction is (S)-2,3,4,5-tetrahydrodipicolinate + NADP(+) + H2O = (2S,4S)-4-hydroxy-2,3,4,5-tetrahydrodipicolinate + NADPH + H(+). The protein operates within amino-acid biosynthesis; L-lysine biosynthesis via DAP pathway; (S)-tetrahydrodipicolinate from L-aspartate: step 4/4. In terms of biological role, catalyzes the conversion of 4-hydroxy-tetrahydrodipicolinate (HTPA) to tetrahydrodipicolinate. In Clostridium perfringens (strain 13 / Type A), this protein is 4-hydroxy-tetrahydrodipicolinate reductase.